Reading from the N-terminus, the 263-residue chain is uncharacterized protein (263 aa).

16-23 provides a ligand contact to ATP; sequence AKGGTGKT.

It to M.jannaschii MJ0547 and MJ0169.

This is an uncharacterized protein from Methanocaldococcus jannaschii (strain ATCC 43067 / DSM 2661 / JAL-1 / JCM 10045 / NBRC 100440) (Methanococcus jannaschii).